The chain runs to 321 residues: Methenyltetrahydromethanopterin cyclohydrolase (321 aa).

It belongs to the MCH family.

Its subcellular location is the cytoplasm. It catalyses the reaction 5,10-methenyl-5,6,7,8-tetrahydromethanopterin + H2O = N(5)-formyl-5,6,7,8-tetrahydromethanopterin + H(+). The protein operates within one-carbon metabolism; methanogenesis from CO(2); 5,10-methenyl-5,6,7,8-tetrahydromethanopterin from CO(2): step 3/3. In terms of biological role, catalyzes the reversible interconversion of 5-formyl-H(4)MPT to methenyl-H(4)MPT(+). This Methanosarcina mazei (strain ATCC BAA-159 / DSM 3647 / Goe1 / Go1 / JCM 11833 / OCM 88) (Methanosarcina frisia) protein is Methenyltetrahydromethanopterin cyclohydrolase.